The primary structure comprises 334 residues: Glyoxylate reductase (334 aa).

Residues 158 to 161 (FGRI), 180 to 182 (SRT), and 239 to 241 (IAR) contribute to the NADP(+) site. Active-site residues include Arg241 and Glu270. His288 (proton donor) is an active-site residue. 288–290 (HIG) lines the NADP(+) pocket.

The protein belongs to the D-isomer specific 2-hydroxyacid dehydrogenase family. GyaR subfamily. In terms of assembly, homodimer.

Its subcellular location is the cytoplasm. It catalyses the reaction glycolate + NAD(+) = glyoxylate + NADH + H(+). The protein is Glyoxylate reductase of Thermococcus gammatolerans (strain DSM 15229 / JCM 11827 / EJ3).